The chain runs to 241 residues: uncharacterized protein (241 aa).

A run of 6 helical transmembrane segments spans residues 1 to 21 (MMMA…GILL), 43 to 63 (FPII…LKNL), 75 to 95 (LPIY…FYAI), 108 to 128 (IYVL…VLML), 160 to 180 (VLTS…HGLL), and 200 to 220 (ILVI…IASG).

To M.jannaschii MJ0871, MJ0880 and MJ1556.

It is found in the cell membrane. This is an uncharacterized protein from Methanocaldococcus jannaschii (strain ATCC 43067 / DSM 2661 / JAL-1 / JCM 10045 / NBRC 100440) (Methanococcus jannaschii).